The sequence spans 163 residues: Protein EARLY RESPONSIVE TO DEHYDRATION 15 (163 aa).

Positions 10-20 (TLNPDAPLFIP) match the PAM2-like motif. The segment at 118 to 163 (NGEMVKKSSGNRSPRSIVEPAKYAEKPAKWGNQRVAAAPRNIHQPR) is disordered.

As to quaternary structure, interacts with PAB2, PAB4 and PAB8. Interacts with MPC. As to expression, expressed in cauline leaves, stems, rosette leaves, immature siliques and primary inflorescences.

The protein resides in the cytoplasm. In terms of biological role, central component of stress responses that interacts with poly(A)-binding proteins. Negative regulator of abscisic acid (ABA) responses, including resistance to drought and freezing as well as stomatal closure regulation. Mediates resistance to the bacterial necrotroph pathogen Erwinia carotovora subsp. carotovora and promotes the induction of marker genes for systemic acquired resistance (SAR). The protein is Protein EARLY RESPONSIVE TO DEHYDRATION 15 (ERD15) of Arabidopsis thaliana (Mouse-ear cress).